We begin with the raw amino-acid sequence, 209 residues long: MGKCQVISHPLIQHKLSILRRQDTSTKDFRELVNEIAMLMGYEVSRDLPLEDVEIQTPVAKTVQKQLAGKKLAIVPILRAGIGMVDGFLSLVPAAKVGHIGMYRNEETLEPVEYLVKLPEDIDQRQIFIVDPMLATGGSAILAVDSLKKRGAANIKFVCLVAAPEGVKKLQEAHPDVDIYTAALDERLNDHGYIVPGLGDAGDRLFGTK.

Residues Arg79, Arg104, and 131–139 contribute to the 5-phospho-alpha-D-ribose 1-diphosphate site; that span reads DPMLATGGS. Uracil contacts are provided by residues Ile194 and 199-201; that span reads GDA. Asp200 is a 5-phospho-alpha-D-ribose 1-diphosphate binding site.

Belongs to the UPRTase family. It depends on Mg(2+) as a cofactor.

The catalysed reaction is UMP + diphosphate = 5-phospho-alpha-D-ribose 1-diphosphate + uracil. Its pathway is pyrimidine metabolism; UMP biosynthesis via salvage pathway; UMP from uracil: step 1/1. Allosterically activated by GTP. Catalyzes the conversion of uracil and 5-phospho-alpha-D-ribose 1-diphosphate (PRPP) to UMP and diphosphate. The chain is Uracil phosphoribosyltransferase from Streptococcus equi subsp. zooepidemicus (strain MGCS10565).